Consider the following 231-residue polypeptide: Large ribosomal subunit protein uL1 (231 aa).

This sequence belongs to the universal ribosomal protein uL1 family. In terms of assembly, part of the 50S ribosomal subunit.

Its function is as follows. Binds directly to 23S rRNA. The L1 stalk is quite mobile in the ribosome, and is involved in E site tRNA release. Protein L1 is also a translational repressor protein, it controls the translation of the L11 operon by binding to its mRNA. This is Large ribosomal subunit protein uL1 from Pseudomonas fluorescens (strain Pf0-1).